The primary structure comprises 438 residues: Aflatoxin cluster transcriptional coactivator aflS (438 aa).

The region spanning 65–134 is the HTH iclR-type domain; sequence LALYNQLLAC…PSPGHVAHSV (70 aa). Positions 95-114 form a DNA-binding region, H-T-H motif; the sequence is FEDVADIAGVPECRLRRLVR.

Interacts with aflR.

The protein localises to the nucleus. The protein resides in the endosome. Transcription coactivator involved in regulation of the aflatoxin biosynthesis gene cluster with aflR. The ratio of the expression data between aflS:aflR plays a crucial role in the regulation of aflatoxins production. A high ratio, produced at a range between 17 and 30 degrees Celsius, corresponds with the production profile of aflatoxin G1 biosynthesis. A low ratio, produced over 30 degrees Celsius, is related to aflatoxin B1 biosynthesis. AflJ may act in aflR transport to or from the nucleus, thus controlling the availability of aflR for transcriptional activation of aflatoxin biosynthesis cluster genes. AflJ may also assist in directing endosomes to the cytoplasmic membrane for aflatoxin export. This is Aflatoxin cluster transcriptional coactivator aflS from Aspergillus parasiticus (strain ATCC 56775 / NRRL 5862 / SRRC 143 / SU-1).